The chain runs to 300 residues: Epimerase family protein MW0731 (300 aa).

Belongs to the NAD(P)-dependent epimerase/dehydratase family. SDR39U1 subfamily.

In Staphylococcus aureus (strain MW2), this protein is Epimerase family protein MW0731.